A 518-amino-acid chain; its full sequence is Gypsy retrotransposon integrase-like protein 1 (518 aa).

Residues 135 to 293 enclose the Integrase catalytic domain; sequence VVGNPWSVVT…PYFQMFNRNP (159 aa). A disordered region spans residues 326-348; sequence NQTPAAGQMESSTSEELSKSKVA. S498 carries the phosphoserine modification.

This chain is Gypsy retrotransposon integrase-like protein 1 (GIN1), found in Rattus norvegicus (Rat).